We begin with the raw amino-acid sequence, 419 residues long: 5-methylthioadenosine/S-adenosylhomocysteine deaminase (419 aa).

H58 and H60 together coordinate Zn(2+). Substrate is bound by residues E87 and H179. Residue H206 coordinates Zn(2+). 2 residues coordinate substrate: E209 and D294. Residue D294 coordinates Zn(2+).

Belongs to the metallo-dependent hydrolases superfamily. MTA/SAH deaminase family. Zn(2+) serves as cofactor.

The enzyme catalyses S-adenosyl-L-homocysteine + H2O + H(+) = S-inosyl-L-homocysteine + NH4(+). It carries out the reaction S-methyl-5'-thioadenosine + H2O + H(+) = S-methyl-5'-thioinosine + NH4(+). Functionally, catalyzes the deamination of 5-methylthioadenosine and S-adenosyl-L-homocysteine into 5-methylthioinosine and S-inosyl-L-homocysteine, respectively. Is also able to deaminate adenosine. The sequence is that of 5-methylthioadenosine/S-adenosylhomocysteine deaminase from Pyrococcus furiosus (strain ATCC 43587 / DSM 3638 / JCM 8422 / Vc1).